A 216-amino-acid chain; its full sequence is Probable RNA 2'-phosphotransferase 1 (216 aa).

Belongs to the KptA/TPT1 family.

Its function is as follows. Removes the 2'-phosphate from RNA via an intermediate in which the phosphate is ADP-ribosylated by NAD followed by a presumed transesterification to release the RNA and generate ADP-ribose 1''-2''-cyclic phosphate (APPR&gt;P). May function as an ADP-ribosylase. This Archaeoglobus fulgidus (strain ATCC 49558 / DSM 4304 / JCM 9628 / NBRC 100126 / VC-16) protein is Probable RNA 2'-phosphotransferase 1 (kptA1).